A 1070-amino-acid polypeptide reads, in one-letter code: Phosphatidylinositol 4,5-bisphosphate 3-kinase catalytic subunit beta isoform (1070 aa).

The 90-residue stretch at 26 to 115 (SDGSISVDFL…LPVLKLVTRS (90 aa)) folds into the PI3K-ABD domain. In terms of domain architecture, PI3K-RBD spans 194-285 (GGKLVVAVHF…RTLPHFILVE (92 aa)). Residue S324 is modified to Phosphoserine. Residues 327–496 (WGNNNPFQIV…NATALHIKFP (170 aa)) enclose the C2 PI3K-type domain. The Nuclear localization signal (NLS) motif lies at 410 to 418 (KVKTKKSTK). Residues 524–701 (ANVSSRGGKK…GVILEAYCRG (178 aa)) form the PIK helical domain. The region spanning 772 to 1053 (YVEKCRYMDS…KFDEALRESW (282 aa)) is the PI3K/PI4K catalytic domain. Residues 778–784 (YMDSKMK) form a G-loop region. The catalytic loop stretch occupies residues 916-924 (GIGDRHSDN). The activation loop stretch occupies residues 935 to 961 (HIDFGHILGNFKSKFGIKRERVPFILT). The residue at position 1070 (S1070) is a Phosphoserine; by autocatalysis.

Belongs to the PI3/PI4-kinase family. In terms of assembly, heterodimer of a catalytic subunit PIK3CB and a p85 regulatory subunit (PIK3R1, PIK3R2 or PIK3R3). Interaction with PIK3R2 is required for nuclear localization and nuclear export. Part of a complex with PIK3R1 and PTEN. Binding to PTEN may antagonize the lipid kinase activity under normal growth conditions. Part of a complex involved in autophagosome formation composed of PIK3C3 and PIK3R4. Interacts with BECN1, ATG14 and RAB5A. Post-translationally, autophosphorylation at Ser-1070 negatively regulates the phosphatidylinositol-4,5-bisphosphate 3-kinase activity.

The protein resides in the cytoplasm. It is found in the nucleus. It catalyses the reaction a 1,2-diacyl-sn-glycero-3-phospho-(1D-myo-inositol-4,5-bisphosphate) + ATP = a 1,2-diacyl-sn-glycero-3-phospho-(1D-myo-inositol-3,4,5-trisphosphate) + ADP + H(+). It carries out the reaction 1-octadecanoyl-2-(5Z,8Z,11Z,14Z)-eicosatetraenoyl-sn-glycero-3-phospho-1D-myo-inositol 4,5-bisphosphate + ATP = 1-octadecanoyl-2-(5Z,8Z,11Z,14Z-eicosatetraenoyl)-sn-glycero-3-phospho-(1D-myo-inositol 3,4,5-triphosphate) + ADP + H(+). The enzyme catalyses L-seryl-[protein] + ATP = O-phospho-L-seryl-[protein] + ADP + H(+). Its pathway is phospholipid metabolism; phosphatidylinositol phosphate biosynthesis. Its function is as follows. Phosphoinositide-3-kinase (PI3K) phosphorylates phosphatidylinositol (PI) derivatives at position 3 of the inositol ring to produce 3-phosphoinositides. Uses ATP and PtdIns(4,5)P2 (phosphatidylinositol 4,5-bisphosphate) to generate phosphatidylinositol 3,4,5-trisphosphate (PIP3). PIP3 plays a key role by recruiting PH domain-containing proteins to the membrane, including AKT1 and PDPK1, activating signaling cascades involved in cell growth, survival, proliferation, motility and morphology. Involved in the activation of AKT1 upon stimulation by G-protein coupled receptors (GPCRs) ligands such as CXCL12, sphingosine 1-phosphate, and lysophosphatidic acid. May also act downstream receptor tyrosine kinases. Required in different signaling pathways for stable platelet adhesion and aggregation. Plays a role in platelet activation signaling triggered by GPCRs, alpha-IIb/beta-3 integrins (ITGA2B/ ITGB3) and ITAM (immunoreceptor tyrosine-based activation motif)-bearing receptors such as GP6. Regulates the strength of adhesion of ITGA2B/ ITGB3 activated receptors necessary for the cellular transmission of contractile forces. Required for platelet aggregation induced by F2 (thrombin) and thromboxane A2 (TXA2). Has a role in cell survival. May have a role in cell migration. Involved in the early stage of autophagosome formation. Modulates the intracellular level of PtdIns3P (phosphatidylinositol 3-phosphate) and activates PIK3C3 kinase activity. May act as a scaffold, independently of its lipid kinase activity to positively regulate autophagy. May have a role in insulin signaling as scaffolding protein in which the lipid kinase activity is not required. May have a kinase-independent function in regulating cell proliferation and in clathrin-mediated endocytosis. Mediator of oncogenic signal in cell lines lacking PTEN. The lipid kinase activity is necessary for its role in oncogenic transformation. Required for the growth of ERBB2 and RAS driven tumors. Also has a protein kinase activity showing autophosphorylation. The sequence is that of Phosphatidylinositol 4,5-bisphosphate 3-kinase catalytic subunit beta isoform (Pik3cb) from Rattus norvegicus (Rat).